Here is a 343-residue protein sequence, read N- to C-terminus: Retroviral-like aspartic protease 1 (343 aa).

At 1-55 the chain is on the cytoplasmic side; that stretch reads MGSPGASLGIKKALQSEQATALPASAPAVSQPTAPAPSCLPKAGQVIPTLLREAP. Positions 1–190 are excised as a propeptide; that stretch reads MGSPGASLGI…HLPKEIVFAN (190 aa). The helical transmembrane segment at 56–76 threads the bilayer; sequence FSSVIAPTLLCGFLFLAWVAA. At 77-343 the chain is on the extracellular side; it reads EVPEESSRMA…SEEGRQELSH (267 aa). The Peptidase A2 domain maps to 207–288; the sequence is VRFLVDSGAQ…AEEAIIGTDV (82 aa). D212 is an active-site residue. Residue N276 is glycosylated (N-linked (GlcNAc...) asparagine). The propeptide occupies 327–343; sequence LIEEDPSSEEGRQELSH.

In terms of assembly, homodimer. Post-translationally, undergoes autocleavage which is necessary for activation of the protein. As to expression, expressed primarily in the granular layer of the epidermis and inner root sheath of hair follicles. In psoriatic skin, expressed throughout the stratum corneum. In ulcerated skin, expressed in the stratum granulosum of intact epidermis but almost absent from ulcerated regions. Expressed in differentiated areas of squamous cell carcinomas but not in undifferentiated tumors.

It localises to the membrane. In terms of biological role, protease responsible for filaggrin processing, essential for the maintenance of a proper epidermis organization. The chain is Retroviral-like aspartic protease 1 from Homo sapiens (Human).